Consider the following 266-residue polypeptide: Pyridoxal phosphate phosphatase YigL (266 aa).

D8 acts as the Nucleophile in catalysis. D8 contributes to the Mg(2+) binding site. L9 serves as a coordination point for phosphate. D10 is a binding site for Mg(2+). Phosphate contacts are provided by residues T42 to G43 and K191. Residue D214 coordinates Mg(2+). Phosphate is bound at residue N217.

It belongs to the HAD-like hydrolase superfamily. Cof family. Mg(2+) is required as a cofactor. The cofactor is Mn(2+). Co(2+) serves as cofactor. It depends on Zn(2+) as a cofactor.

It carries out the reaction pyridoxal 5'-phosphate + H2O = pyridoxal + phosphate. The enzyme catalyses sugar phosphate + H2O = sugar + phosphate.. Its function is as follows. Catalyzes the dephosphorylation of pyridoxal-phosphate (PLP) and sugar phosphate. The chain is Pyridoxal phosphate phosphatase YigL (yigL) from Escherichia coli O157:H7.